Reading from the N-terminus, the 434-residue chain is ATP phosphoribosyltransferase regulatory subunit (434 aa).

Residues 1 to 48 form a disordered region; the sequence is MYGRGSGAEHSRGSGAEHFWDPRPEASSTVSSSLRPPSGARDLLPREV. A compositionally biased stretch (low complexity) spans 27–38; it reads SSTVSSSLRPPS.

It belongs to the class-II aminoacyl-tRNA synthetase family. HisZ subfamily. As to quaternary structure, heteromultimer composed of HisG and HisZ subunits.

Its subcellular location is the cytoplasm. It participates in amino-acid biosynthesis; L-histidine biosynthesis; L-histidine from 5-phospho-alpha-D-ribose 1-diphosphate: step 1/9. Required for the first step of histidine biosynthesis. May allow the feedback regulation of ATP phosphoribosyltransferase activity by histidine. The sequence is that of ATP phosphoribosyltransferase regulatory subunit from Synechococcus sp. (strain JA-2-3B'a(2-13)) (Cyanobacteria bacterium Yellowstone B-Prime).